The following is a 192-amino-acid chain: Phosphoheptose isomerase (192 aa).

Residues 37–192 (IAASLRDGGK…IMLIEKELAV (156 aa)) enclose the SIS domain. 52–54 (NGG) is a binding site for substrate. 2 residues coordinate Zn(2+): His-61 and Glu-65. Substrate contacts are provided by residues Glu-65, 93–94 (ND), 119–121 (STS), Ser-124, and Gln-172. Positions 172 and 180 each coordinate Zn(2+).

The protein belongs to the SIS family. GmhA subfamily. As to quaternary structure, homotetramer. Zn(2+) serves as cofactor.

The protein localises to the cytoplasm. The enzyme catalyses 2 D-sedoheptulose 7-phosphate = D-glycero-alpha-D-manno-heptose 7-phosphate + D-glycero-beta-D-manno-heptose 7-phosphate. The protein operates within carbohydrate biosynthesis; D-glycero-D-manno-heptose 7-phosphate biosynthesis; D-glycero-alpha-D-manno-heptose 7-phosphate and D-glycero-beta-D-manno-heptose 7-phosphate from sedoheptulose 7-phosphate: step 1/1. Its function is as follows. Catalyzes the isomerization of sedoheptulose 7-phosphate in D-glycero-D-manno-heptose 7-phosphate. The sequence is that of Phosphoheptose isomerase from Tolumonas auensis (strain DSM 9187 / NBRC 110442 / TA 4).